The following is a 199-amino-acid chain: Putative 3-methyladenine DNA glycosylase (199 aa).

The protein belongs to the DNA glycosylase MPG family.

This Chlorobium phaeobacteroides (strain BS1) protein is Putative 3-methyladenine DNA glycosylase.